The chain runs to 156 residues: Transcriptional regulator MraZ (156 aa).

2 SpoVT-AbrB domains span residues 7–64 (KERH…EPSV) and 93–136 (LEMV…EPAR).

This sequence belongs to the MraZ family. As to quaternary structure, forms oligomers.

It localises to the cytoplasm. The protein localises to the nucleoid. In Chlorobium phaeovibrioides (strain DSM 265 / 1930) (Prosthecochloris vibrioformis (strain DSM 265)), this protein is Transcriptional regulator MraZ.